The primary structure comprises 623 residues: Phosphatidylinositol-3-phosphatase SAC1 (623 aa).

Over Met-1–Tyr-523 the chain is Cytoplasmic. The region spanning Leu-115–Gly-454 is the SAC domain. Glycyl lysine isopeptide (Lys-Gly) (interchain with G-Cter in ubiquitin) cross-links involve residues Lys-246 and Lys-358. A helical transmembrane segment spans residues Ile-524 to Phe-544. Over Pro-545 to Ser-552 the chain is Lumenal. A helical transmembrane segment spans residues Lys-553 to Phe-573. The Cytoplasmic segment spans residues Lys-574 to Asp-623.

Component of the SPOTS complex, at least composed of LCB1/2 (LCB1 and/or LCB2), ORM1/2 (ORM1 and/or ORM2), SAC1 and TSC3.

Its subcellular location is the endoplasmic reticulum membrane. The protein localises to the golgi apparatus membrane. The catalysed reaction is a 1,2-diacyl-sn-glycero-3-phospho-(1D-myo-inositol-3-phosphate) + H2O = a 1,2-diacyl-sn-glycero-3-phospho-(1D-myo-inositol) + phosphate. It catalyses the reaction a 1,2-diacyl-sn-glycero-3-phospho-(1D-myo-inositol 4-phosphate) + H2O = a 1,2-diacyl-sn-glycero-3-phospho-(1D-myo-inositol) + phosphate. In terms of biological role, phosphoinositide phosphatase which catalyzes the hydrolysis of phosphatidylinositol 3-phosphate (PtdIns(3)P) and phosphatidylinositol 4-phosphate (PtdIns(4)P). Has low activity towards phosphatidylinositol-3,5-bisphosphate (PtdIns(3,5)P2). May be involved in the coordination of the activities of the secretory pathway and the actin cytoskeleton. The chain is Phosphatidylinositol-3-phosphatase SAC1 (SAC1) from Saccharomyces cerevisiae (strain ATCC 204508 / S288c) (Baker's yeast).